The primary structure comprises 660 residues: DNA mismatch repair protein MutL (660 aa).

Belongs to the DNA mismatch repair MutL/HexB family.

Its function is as follows. This protein is involved in the repair of mismatches in DNA. It is required for dam-dependent methyl-directed DNA mismatch repair. May act as a 'molecular matchmaker', a protein that promotes the formation of a stable complex between two or more DNA-binding proteins in an ATP-dependent manner without itself being part of a final effector complex. This Streptococcus equi subsp. zooepidemicus (strain H70) protein is DNA mismatch repair protein MutL.